Reading from the N-terminus, the 317-residue chain is Transcription factor EC (317 aa).

The segment at 1-90 (MTLDHRLFSQ…GLMNASCPSI (90 aa)) is necessary for transcriptional transactivation. The 54-residue stretch at 110-163 (QKKDNHNLIERRRRYNINYRIKELGTLIPKSNDPDIRWNKGTILKASVDYIKWL) folds into the bHLH domain. A necessary for transcriptional transactivation region spans residues 242–317 (TSPEFYEQAV…SLSSEDGDEL (76 aa)).

Belongs to the MiT/TFE family. As to quaternary structure, homodimer. Forms heterodimers with TFE3. Forms heterodimers with MITF. Interacts with MITF. As to expression, expressed in kidney, spleen, lung, liver, testis and muscle.

It localises to the nucleus. In terms of biological role, transcriptional regulator that acts as a repressor or an activator. Acts as a transcriptional repressor on minimal promoter containing mu E3 enhancer sequence. Binds to mu E3 DNA sequence of the immunoglobulin heavy-chain gene enhancer. Acts as a transcriptional transactivator on the proximal promoter region of the tartrate-resistant acid phosphatase (TRAP) E-box containing promoter. Collaborates with MITF in target gene activation. Acts as a transcriptional repressor on minimal promoter containing mu E3 enhancer sequence. Binds to mu E3 DNA sequence of the immunoglobulin heavy-chain gene enhancer. Binds DNA in a homo- or heterodimeric form. This chain is Transcription factor EC (Tfec), found in Rattus norvegicus (Rat).